The chain runs to 339 residues: Glucokinase (339 aa).

16 to 21 (GDIGGT) provides a ligand contact to ATP.

This sequence belongs to the bacterial glucokinase family.

It is found in the cytoplasm. The enzyme catalyses D-glucose + ATP = D-glucose 6-phosphate + ADP + H(+). This is Glucokinase from Pseudomonas paraeruginosa (strain DSM 24068 / PA7) (Pseudomonas aeruginosa (strain PA7)).